We begin with the raw amino-acid sequence, 593 residues long: CTD kinase subunit alpha (593 aa).

Polar residues-rich tracts occupy residues 1 to 17 (MSYS…TEPN) and 29 to 51 (QLSG…FKNN). The disordered stretch occupies residues 1-262 (MSYSKSTIYR…ESVPAPLPSP (262 aa)). Ser56 and Ser58 each carry phosphoserine. The span at 90 to 103 (RSRKSRRRKGKKAF) shows a compositional bias: basic residues. A phosphoserine mark is found at Ser104 and Ser109. Low complexity predominate over residues 139-152 (SSSSASVSPISPSA). Residues 160 to 170 (QASSFRRSPPS) show a composition bias toward polar residues. Positions 198–215 (IPHETTSSDTQKKSSVSS) are enriched in low complexity. The Protein kinase domain maps to 277 to 561 (YEKIDQIGEG…AHETLMHEYF (285 aa)). ATP contacts are provided by residues 283–291 (IGEGTYGKV) and Lys306. Asp399 functions as the Proton acceptor in the catalytic mechanism.

Belongs to the protein kinase superfamily. CMGC Ser/Thr protein kinase family. CDC2/CDKX subfamily. CTDK-I consists of three subunits, ctk1/lsk1, ctk2/lsc1 and ctk3 (also called alpha, beta and gamma). Interacts with ctk2/lsc1. This interaction is dependent on kinase activity.

The protein localises to the nucleus. Its subcellular location is the nucleolus. It catalyses the reaction [DNA-directed RNA polymerase] + ATP = phospho-[DNA-directed RNA polymerase] + ADP + H(+). In terms of biological role, catalytic subunit of the CTDK-I complex, which hyperphosphorylates the C-terminal heptapeptide repeat domain (CTD) of the largest RNA polymerase II subunit. Involved in RNA polymerase II transcriptional elongation and pre-mRNA 3'-end processing. Together with ctk2/lsc1, required for the regulation of cytokinesis by phosphorylating 'Ser-2' residues found in the heptad repeats of the CTD. Required for nuclear localization of ctk2/lsc1. Positively regulates the septation initiation network (SIN) and promotes successful completion of cytokinesis in response to perturbation of the actomyosin ring. Acts in parallel to clp1 to promote actomyosin ring stability upon cytokinesis checkpoint activation. In Schizosaccharomyces pombe (strain 972 / ATCC 24843) (Fission yeast), this protein is CTD kinase subunit alpha.